We begin with the raw amino-acid sequence, 385 residues long: 1-deoxy-D-xylulose 5-phosphate reductoisomerase (385 aa).

Residues Thr11, Gly12, Ser13, Ile14, Asn39, and Asn123 each contribute to the NADPH site. Lys124 lines the 1-deoxy-D-xylulose 5-phosphate pocket. Glu125 contacts NADPH. A Mn(2+)-binding site is contributed by Asp149. Positions 150, 151, 174, and 197 each coordinate 1-deoxy-D-xylulose 5-phosphate. Residue Glu151 coordinates Mn(2+). NADPH is bound at residue Gly203. 4 residues coordinate 1-deoxy-D-xylulose 5-phosphate: Ser210, Asn215, Lys216, and Glu219. Glu219 contributes to the Mn(2+) binding site.

Belongs to the DXR family. It depends on Mg(2+) as a cofactor. Mn(2+) is required as a cofactor.

It carries out the reaction 2-C-methyl-D-erythritol 4-phosphate + NADP(+) = 1-deoxy-D-xylulose 5-phosphate + NADPH + H(+). It functions in the pathway isoprenoid biosynthesis; isopentenyl diphosphate biosynthesis via DXP pathway; isopentenyl diphosphate from 1-deoxy-D-xylulose 5-phosphate: step 1/6. In terms of biological role, catalyzes the NADPH-dependent rearrangement and reduction of 1-deoxy-D-xylulose-5-phosphate (DXP) to 2-C-methyl-D-erythritol 4-phosphate (MEP). The sequence is that of 1-deoxy-D-xylulose 5-phosphate reductoisomerase from Porphyromonas gingivalis (strain ATCC 33277 / DSM 20709 / CIP 103683 / JCM 12257 / NCTC 11834 / 2561).